Here is a 98-residue protein sequence, read N- to C-terminus: Large ribosomal subunit protein uL23 (98 aa).

It belongs to the universal ribosomal protein uL23 family. In terms of assembly, part of the 50S ribosomal subunit. Contacts protein L29, and trigger factor when it is bound to the ribosome.

Its function is as follows. One of the early assembly proteins it binds 23S rRNA. One of the proteins that surrounds the polypeptide exit tunnel on the outside of the ribosome. Forms the main docking site for trigger factor binding to the ribosome. The polypeptide is Large ribosomal subunit protein uL23 (Maricaulis maris (strain MCS10) (Caulobacter maris)).